Here is a 378-residue protein sequence, read N- to C-terminus: UPF0754 membrane protein SH1116 (378 aa).

2 helical membrane passes run 4 to 24 and 358 to 378; these read FLVI…TNVI and SLGF…AIFV.

The protein belongs to the UPF0754 family.

It is found in the cell membrane. This is UPF0754 membrane protein SH1116 from Staphylococcus haemolyticus (strain JCSC1435).